A 319-amino-acid chain; its full sequence is Acetyl esterase (319 aa).

The short motif at 91 to 93 (HGG) is the Involved in the stabilization of the negatively charged intermediate by the formation of the oxyanion hole element. Residues Ser-165, Asp-262, and His-292 contribute to the active site.

It belongs to the 'GDXG' lipolytic enzyme family. As to quaternary structure, homodimer. Interacts with MalT and MelA.

The protein resides in the cytoplasm. Displays esterase activity towards short chain fatty esters (acyl chain length of up to 8 carbons). Able to hydrolyze triacetylglycerol (triacetin) and tributyrylglycerol (tributyrin), but not trioleylglycerol (triolein) or cholesterol oleate. Negatively regulates MalT activity by antagonizing maltotriose binding. Inhibits MelA galactosidase activity. The chain is Acetyl esterase from Shigella boydii serotype 18 (strain CDC 3083-94 / BS512).